The sequence spans 309 residues: Taste receptor type 2 member 46 (309 aa).

Position 1 (Met-1) is a topological domain, extracellular. A helical transmembrane segment spans residues 2–22; it reads ITFLPIIFSILIVVTFVIGNF. The Cytoplasmic portion of the chain corresponds to 23 to 46; that stretch reads ANGFIALANSIEWFKRQKISFADQ. A helical transmembrane segment spans residues 47–67; sequence ILTALAVSRVGLLWVLLLNWY. The Extracellular segment spans residues 68–86; it reads ATELNPAFYSIEVRITAYN. The helical transmembrane segment at 87-107 threads the bilayer; it reads VWAVISHFSNWLATSLSIFYL. The Cytoplasmic segment spans residues 108-126; it reads LKIANFSNLIFLRLKRRVK. The helical transmembrane segment at 127 to 147 threads the bilayer; that stretch reads SVVLVILLGPLLFLVCHLFVI. Residues 148–178 lie on the Extracellular side of the membrane; that stretch reads NMNQIIWTKEYEGNMTWKIKLRSAMYLSDTT. N-linked (GlcNAc...) asparagine glycosylation is present at Asn-161. A helical membrane pass occupies residues 179-199; that stretch reads VTILANLVPFTLTLISFLLLI. Residues 200 to 229 lie on the Cytoplasmic side of the membrane; the sequence is CSLCKHLKKMQLHGKGSQDPSMKVHIKALQ. Residues 230–250 form a helical membrane-spanning segment; sequence TVTSFLLLCAIYFLSVIMSVW. The Extracellular segment spans residues 251-259; the sequence is SFESLENKP. The helical transmembrane segment at 260–280 threads the bilayer; that stretch reads VFMFCEAITFSYPSTHPFILI. The Cytoplasmic segment spans residues 281 to 309; the sequence is WGNKKLKQTFLSVLWHVRYWVKGEKPSSS.

This sequence belongs to the G-protein coupled receptor T2R family.

Its subcellular location is the membrane. The protein resides in the cell projection. The protein localises to the cilium membrane. Its function is as follows. Receptor that may play a role in the perception of bitterness and is gustducin-linked. May play a role in sensing the chemical composition of the gastrointestinal content. The activity of this receptor may stimulate alpha gustducin, mediate PLC-beta-2 activation and lead to the gating of TRPM5. In airway epithelial cells, binding of bitter compounds increases the intracellular calcium ion concentration and stimulates ciliary beat frequency. This is Taste receptor type 2 member 46 (TAS2R46) from Gorilla gorilla gorilla (Western lowland gorilla).